Consider the following 124-residue polypeptide: Small ribosomal subunit protein uS12 (124 aa).

3-methylthioaspartic acid is present on Asp89. The interval 104-124 is disordered; that stretch reads SAGVQNRNRGRSKYGTKRPKK. Positions 111 to 124 are enriched in basic residues; the sequence is NRGRSKYGTKRPKK.

This sequence belongs to the universal ribosomal protein uS12 family. As to quaternary structure, part of the 30S ribosomal subunit. Contacts proteins S8 and S17. May interact with IF1 in the 30S initiation complex.

Functionally, with S4 and S5 plays an important role in translational accuracy. Its function is as follows. Interacts with and stabilizes bases of the 16S rRNA that are involved in tRNA selection in the A site and with the mRNA backbone. Located at the interface of the 30S and 50S subunits, it traverses the body of the 30S subunit contacting proteins on the other side and probably holding the rRNA structure together. The combined cluster of proteins S8, S12 and S17 appears to hold together the shoulder and platform of the 30S subunit. The chain is Small ribosomal subunit protein uS12 from Pelotomaculum thermopropionicum (strain DSM 13744 / JCM 10971 / SI).